The sequence spans 734 residues: Photosystem I P700 chlorophyll a apoprotein A2 (734 aa).

Helical transmembrane passes span 46 to 69 (IFAS…FHVA), 135 to 158 (LYTG…LHLQ), 175 to 199 (LNHH…HVAI), 273 to 291 (IAHH…GHMY), 330 to 353 (LHFQ…QHMY), 369 to 395 (AALY…IFFV), 417 to 439 (AIIS…LYVH), and 517 to 535 (FLVH…LILV). [4Fe-4S] cluster is bound by residues cysteine 559 and cysteine 568. Helical transmembrane passes span 575-596 (AFYL…YWHW) and 643-665 (LSVW…MFLI). Residues histidine 654, methionine 662, and tyrosine 670 each coordinate chlorophyll a. Phylloquinone is bound at residue tryptophan 671. A helical membrane pass occupies residues 707 to 727 (LVGLAHFSVGYVLTYAAFLIA).

The protein belongs to the PsaA/PsaB family. As to quaternary structure, the PsaA/B heterodimer binds the P700 chlorophyll special pair and subsequent electron acceptors. PSI consists of a core antenna complex that captures photons, and an electron transfer chain that converts photonic excitation into a charge separation. The eukaryotic PSI reaction center is composed of at least 11 subunits. P700 is a chlorophyll a/chlorophyll a' dimer, A0 is one or more chlorophyll a, A1 is one or both phylloquinones and FX is a shared 4Fe-4S iron-sulfur center. is required as a cofactor.

It localises to the plastid. The protein resides in the chloroplast thylakoid membrane. It carries out the reaction reduced [plastocyanin] + hnu + oxidized [2Fe-2S]-[ferredoxin] = oxidized [plastocyanin] + reduced [2Fe-2S]-[ferredoxin]. Functionally, psaA and PsaB bind P700, the primary electron donor of photosystem I (PSI), as well as the electron acceptors A0, A1 and FX. PSI is a plastocyanin-ferredoxin oxidoreductase, converting photonic excitation into a charge separation, which transfers an electron from the donor P700 chlorophyll pair to the spectroscopically characterized acceptors A0, A1, FX, FA and FB in turn. Oxidized P700 is reduced on the lumenal side of the thylakoid membrane by plastocyanin. The protein is Photosystem I P700 chlorophyll a apoprotein A2 of Chlorokybus atmophyticus (Soil alga).